The primary structure comprises 152 residues: Deoxyuridine 5'-triphosphate nucleotidohydrolase (152 aa).

Residues 71-73 (RSG), Asn-84, 88-90 (LID), and Met-98 each bind substrate.

It belongs to the dUTPase family. It depends on Mg(2+) as a cofactor.

It carries out the reaction dUTP + H2O = dUMP + diphosphate + H(+). Its pathway is pyrimidine metabolism; dUMP biosynthesis; dUMP from dCTP (dUTP route): step 2/2. In terms of biological role, this enzyme is involved in nucleotide metabolism: it produces dUMP, the immediate precursor of thymidine nucleotides and it decreases the intracellular concentration of dUTP so that uracil cannot be incorporated into DNA. This chain is Deoxyuridine 5'-triphosphate nucleotidohydrolase, found in Shewanella halifaxensis (strain HAW-EB4).